The chain runs to 227 residues: Cytochrome c oxidase subunit 2 (227 aa).

Over 1–14 (MAYPFQLGLQDATS) the chain is Mitochondrial intermembrane. The helical transmembrane segment at 15 to 45 (PIMEELLHFHDHTLMIVFLISSLVLYIITLM) threads the bilayer. Residues 46–59 (LTTKLTHTSTMDAQ) are Mitochondrial matrix-facing. The helical transmembrane segment at 60–87 (EVETVWTILPAIILILIALPSLRILYMM) threads the bilayer. Topologically, residues 88 to 227 (DEINNPSLTV…YFETWSALMV (140 aa)) are mitochondrial intermembrane. The Cu cation site is built by H161, C196, E198, C200, H204, and M207. E198 provides a ligand contact to Mg(2+). Position 218 is a phosphotyrosine (Y218).

It belongs to the cytochrome c oxidase subunit 2 family. Component of the cytochrome c oxidase (complex IV, CIV), a multisubunit enzyme composed of 14 subunits. The complex is composed of a catalytic core of 3 subunits MT-CO1, MT-CO2 and MT-CO3, encoded in the mitochondrial DNA, and 11 supernumerary subunits COX4I, COX5A, COX5B, COX6A, COX6B, COX6C, COX7A, COX7B, COX7C, COX8 and NDUFA4, which are encoded in the nuclear genome. The complex exists as a monomer or a dimer and forms supercomplexes (SCs) in the inner mitochondrial membrane with NADH-ubiquinone oxidoreductase (complex I, CI) and ubiquinol-cytochrome c oxidoreductase (cytochrome b-c1 complex, complex III, CIII), resulting in different assemblies (supercomplex SCI(1)III(2)IV(1) and megacomplex MCI(2)III(2)IV(2)). Found in a complex with TMEM177, COA6, COX18, COX20, SCO1 and SCO2. Interacts with TMEM177 in a COX20-dependent manner. Interacts with COX20. Interacts with COX16. Cu cation serves as cofactor.

The protein localises to the mitochondrion inner membrane. The catalysed reaction is 4 Fe(II)-[cytochrome c] + O2 + 8 H(+)(in) = 4 Fe(III)-[cytochrome c] + 2 H2O + 4 H(+)(out). Functionally, component of the cytochrome c oxidase, the last enzyme in the mitochondrial electron transport chain which drives oxidative phosphorylation. The respiratory chain contains 3 multisubunit complexes succinate dehydrogenase (complex II, CII), ubiquinol-cytochrome c oxidoreductase (cytochrome b-c1 complex, complex III, CIII) and cytochrome c oxidase (complex IV, CIV), that cooperate to transfer electrons derived from NADH and succinate to molecular oxygen, creating an electrochemical gradient over the inner membrane that drives transmembrane transport and the ATP synthase. Cytochrome c oxidase is the component of the respiratory chain that catalyzes the reduction of oxygen to water. Electrons originating from reduced cytochrome c in the intermembrane space (IMS) are transferred via the dinuclear copper A center (CU(A)) of subunit 2 and heme A of subunit 1 to the active site in subunit 1, a binuclear center (BNC) formed by heme A3 and copper B (CU(B)). The BNC reduces molecular oxygen to 2 water molecules using 4 electrons from cytochrome c in the IMS and 4 protons from the mitochondrial matrix. This chain is Cytochrome c oxidase subunit 2 (MT-CO2), found in Vulpes macrotis (Kit fox).